Consider the following 443-residue polypeptide: ATP-dependent protease ATPase subunit HslU (443 aa).

ATP is bound by residues I18, 60 to 65 (GVGKTE), D256, E321, and R393.

It belongs to the ClpX chaperone family. HslU subfamily. In terms of assembly, a double ring-shaped homohexamer of HslV is capped on each side by a ring-shaped HslU homohexamer. The assembly of the HslU/HslV complex is dependent on binding of ATP.

Its subcellular location is the cytoplasm. Functionally, ATPase subunit of a proteasome-like degradation complex; this subunit has chaperone activity. The binding of ATP and its subsequent hydrolysis by HslU are essential for unfolding of protein substrates subsequently hydrolyzed by HslV. HslU recognizes the N-terminal part of its protein substrates and unfolds these before they are guided to HslV for hydrolysis. The protein is ATP-dependent protease ATPase subunit HslU of Buchnera aphidicola subsp. Acyrthosiphon pisum (strain 5A).